A 624-amino-acid chain; its full sequence is ATP-dependent RNA helicase MRH4, mitochondrial (624 aa).

The N-terminal 43 residues, 1–43, are a transit peptide targeting the mitochondrion; it reads MSPVASTCLLCEMRTVVWGWQPAVPQPWHFVRFASSARLARRK. Residues 41–120 form a disordered region; the sequence is RRKPARMALS…KDAADKKQDG (80 aa). The segment covering 86 to 119 has biased composition (basic and acidic residues); that stretch reads RLPDRPIPRSDAELKRSSSDLNNKEKDAADKKQD. A Q motif motif is present at residues 151–184; the sequence is TSFDQFPLLPQVREAVYANAFPTLTEISPTPIQR. Residues 212–427 enclose the Helicase ATP-binding domain; sequence EEELFHFDQF…EKKFPEMKRL (216 aa). Residue 225–232 coordinates ATP; that stretch reads AETGTGKT. The short motif at 374–377 is the DEAD box element; the sequence is DEAD. Positions 438–624 constitute a Helicase C-terminal domain; that stretch reads RVQLGVVDVD…EAMFRGQALI (187 aa).

Belongs to the DEAD box helicase family. MRH4 subfamily.

Its subcellular location is the mitochondrion. It carries out the reaction ATP + H2O = ADP + phosphate + H(+). ATP-binding RNA helicase involved in mitochondrial RNA metabolism. Required for maintenance of mitochondrial DNA. In Ajellomyces capsulatus (strain NAm1 / WU24) (Darling's disease fungus), this protein is ATP-dependent RNA helicase MRH4, mitochondrial (MRH4).